A 466-amino-acid polypeptide reads, in one-letter code: Putative transcription factor bHLH041 (466 aa).

3 disordered regions span residues 108–129 (PANSDYLRPPHYPSSSSSSLSP), 194–213 (LTGPSSPPSTSSSPQRKGRA), and 260–289 (RENATTHGEGSGGSGGGGRYTSGPSATQLQ). Low complexity predominate over residues 120-129 (PSSSSSSLSP). Positions 268–279 (EGSGGSGGGGRY) are enriched in gly residues. The region spanning 285-334 (ATQLQHMISERKRREKLNESFQALRSLLPPGTKKDKASVLSIAREQLSSL) is the bHLH domain.

Homodimer.

Its subcellular location is the nucleus. This chain is Putative transcription factor bHLH041 (BHLH41), found in Arabidopsis thaliana (Mouse-ear cress).